A 1914-amino-acid polypeptide reads, in one-letter code: Autophagy-related protein 2 homolog A (1914 aa).

Residues 14–112 enclose the Chorein N-terminal domain; sequence ERVCRYLLQH…LTLQPRQGSG (99 aa). S764, S869, S875, and S877 each carry phosphoserine. Residues 1222–1243 form a disordered region; that stretch reads DLHPPPRPPSPTEIAGQKLSES. Phosphoserine occurs at positions 1246, 1282, and 1290. The disordered stretch occupies residues 1299–1337; sequence GERSGAQAPLPPPGASSHTLGSKAKEHENEEEGDGDTLD. Positions 1327 to 1337 are enriched in acidic residues; it reads NEEEGDGDTLD. The tract at residues 1337–1383 is WIPI-interacting; sequence DSDEFCILDAPGLGIAPRDGEPIVTQLHPGPIIVHDGHFSQPLGSTD. Residue S1381 is modified to Phosphoserine. Disordered stretches follow at residues 1427–1452, 1589–1634, and 1803–1822; these read LTGPRVSPSRSSGPNRPQNSWRTQGG, MVPG…SSSD, and RSLQDKRSSRKLRRGQQPAD. Positions 1429–1446 are enriched in low complexity; that stretch reads GPRVSPSRSSGPNRPQNS.

The protein belongs to the ATG2 family. In terms of assembly, interacts with ATG9A (via C-terminus). Interacts with TMEM41B. Interacts with VMP1.

It is found in the preautophagosomal structure membrane. The protein localises to the lipid droplet. The protein resides in the endoplasmic reticulum membrane. It carries out the reaction a 1,2-diacyl-sn-glycero-3-phospho-L-serine(in) = a 1,2-diacyl-sn-glycero-3-phospho-L-serine(out). It catalyses the reaction a 1,2-diacyl-sn-glycero-3-phosphoethanolamine(in) = a 1,2-diacyl-sn-glycero-3-phosphoethanolamine(out). In terms of biological role, lipid transfer protein involved in autophagosome assembly. Tethers the edge of the isolation membrane (IM) to the endoplasmic reticulum (ER) and mediates direct lipid transfer from ER to IM for IM expansion. Binds to the ER exit site (ERES), which is the membrane source for autophagosome formation, and extracts phospholipids from the membrane source and transfers them to ATG9 (ATG9A or ATG9B) to the IM for membrane expansion. Lipid transfer activity is enhanced by WIPI1 and WDR45/WIPI4, which promote ATG2A-association with phosphatidylinositol 3-monophosphate (PI3P)-containing membranes. Also regulates lipid droplets morphology and distribution within the cell. (Microbial infection) Mediates the intracellular lifestyle of Cryptococcus neoformans by supporting infection. The protein is Autophagy-related protein 2 homolog A of Mus musculus (Mouse).